The sequence spans 433 residues: Tol-Pal system protein TolB (433 aa).

The signal sequence occupies residues 1 to 21 (MIKRLRGLLVLLCCVAGMAMA).

This sequence belongs to the TolB family. As to quaternary structure, the Tol-Pal system is composed of five core proteins: the inner membrane proteins TolA, TolQ and TolR, the periplasmic protein TolB and the outer membrane protein Pal. They form a network linking the inner and outer membranes and the peptidoglycan layer.

It localises to the periplasm. In terms of biological role, part of the Tol-Pal system, which plays a role in outer membrane invagination during cell division and is important for maintaining outer membrane integrity. This Pseudomonas entomophila (strain L48) protein is Tol-Pal system protein TolB.